The sequence spans 205 residues: SREBP regulating gene protein (205 aa).

Residues 1–16 (MALYVSMVWRKILRKR) lie on the Cytoplasmic side of the membrane. Residues 17 to 35 (WVLGVVFGLSLIYFLTSTF) form a helical membrane-spanning segment. Topologically, residues 36–205 (KQEERTVRDR…GESPPELLPI (170 aa)) are lumenal. Residue asparagine 67 is glycosylated (N-linked (GlcNAc...) asparagine).

It belongs to the SPRING family.

Its subcellular location is the golgi apparatus membrane. Its function is as follows. Positively regulates hepatic SREBP signaling pathway by modulating the proper localization of SCAP (SREBP cleavage-activating protein) to the endoplasmic reticulum, thereby controlling the level of functional SCAP. The sequence is that of SREBP regulating gene protein from Xenopus laevis (African clawed frog).